Here is an 83-residue protein sequence, read N- to C-terminus: MKPVLLTLVVVTIVCLDLGYTRICLKQEPFQPETTTTCPEGEDACYNLFWSDHSEIKIEMGCGCPKTEPYTNLYCCKIDSCNK.

The N-terminal stretch at 1–21 (MKPVLLTLVVVTIVCLDLGYT) is a signal peptide. 4 disulfide bridges follow: C24–C45, C38–C62, C64–C75, and C76–C81.

Belongs to the three-finger toxin family. Short-chain subfamily. Type I alpha-neurotoxin sub-subfamily. Expressed by the venom gland.

It is found in the secreted. Its function is as follows. Binds to muscle nicotinic acetylcholine receptor (nAChR) and inhibit acetylcholine from binding to the receptor, thereby impairing neuromuscular transmission. This chain is Weak toxin DE-1 homolog 1, found in Ophiophagus hannah (King cobra).